We begin with the raw amino-acid sequence, 174 residues long: CEN-like protein 1 (174 aa).

Belongs to the phosphatidylethanolamine-binding protein family. Expressed in vegetative axillary meristems but not in the main shoot meristem.

The protein resides in the cytoplasm. In terms of biological role, may form complexes with phosphorylated ligands by interfering with kinases and their effectors. The sequence is that of CEN-like protein 1 (CET1) from Nicotiana tabacum (Common tobacco).